A 759-amino-acid polypeptide reads, in one-letter code: LIM domain and actin-binding protein 1 (759 aa).

M1 carries the N-acetylmethionine modification. Residues S4, S15, and S55 each carry the phosphoserine modification. Residues 78–131 are disordered; it reads NPGLGAESHTDSLRNSSTEIRHRADHPPAEVTSHAASGAKADQEEQIHPRSRLR. The span at 96 to 105 shows a compositional bias: basic and acidic residues; it reads EIRHRADHPP. Phosphoserine is present on S132. Basic and acidic residues predominate over residues 146–177; that stretch reads KDGEDLKDHSTESKKMENCLGESRHEVEKSEI. Residues 146-182 form a disordered region; the sequence is KDGEDLKDHSTESKKMENCLGESRHEVEKSEISENTD. Residues 164–166 carry the Required for interaction with NPC1L1 motif; the sequence is CLG. A phosphoserine mark is found at A183 and S225. Disordered stretches follow at residues 211-264 and 323-381; these read ILRA…RLSE and EKIS…AMKK. Phosphotyrosine is present on Y229. 2 positions are modified to phosphoserine: S230 and S242. The span at 247–258 shows a compositional bias: basic and acidic residues; the sequence is DSEKNESRRNLE. Phosphoserine occurs at positions 263, 343, 350, 362, 365, 369, and 374. The span at 362–376 shows a compositional bias: low complexity; it reads SPDSRASSLSESSPP. Positions 388 to 448 constitute an LIM zinc-binding domain; that stretch reads ETCVECQKTV…KPHFNQLFKS (61 aa). K439 carries the post-translational modification N6-succinyllysine. S490 bears the Phosphoserine mark. The required for interaction with MYO5B stretch occupies residues 493–513; sequence VEDAPIAKVGVLAASMEAKAS. The tract at residues 509–709 is disordered; sequence EAKASSQQEK…QEPKSLNWSS (201 aa). Composition is skewed to basic and acidic residues over residues 516 to 527 and 556 to 567; these read QEKEDKPAETKK and WPPEDEISKPEV. The segment covering 595-607 has biased composition (polar residues); that stretch reads ASFQSTSVKSPKT. Phosphoserine is present on residues S601, S604, S609, and S617. Over residues 644–655 the composition is skewed to polar residues; that stretch reads KNGNVGKTTWQN. Over residues 656-673 the composition is skewed to basic and acidic residues; sequence KESKGETGKRSKEGHSLE. The segment covering 674–691 has biased composition (acidic residues); that stretch reads MENENLVENGADSDEDDN. A phosphoserine mark is found at S686, S692, S698, S726, and S741. The span at 693–709 shows a compositional bias: polar residues; sequence FLKQQSPQEPKSLNWSS.

As to quaternary structure, interacts with NPC1L1; bridges NPC1L1 with MYO5B. Interacts with MYO5B; bridges NPC1L1 with MYO5B. Interacts with PXN; this complex stabilizes actin dynamics. Interacts with F-actin and G-actin. Interacts with LUZP1 (via C-terminus); both proteins restrict ciliation and may work together to regulate this process. Binds RAB40B (GTP-bound); interaction influences LIMA1 subcellular localization in lamellipodia during cell migration. Ubiquitinated by the ECS(RAB40B) complex leading to its degradation. In terms of processing, phosphorylation of the C-terminal region by MAPK1/MAPK3 reduces its association with F-actin and contributes to actin filament reorganization and enhances cell motility. In terms of tissue distribution, highly expressed in placenta, kidney, pancreas, prostate, ovary, spleen and heart. Also detected in lung, liver, brain, skeletal muscle, thymus, testis and intestine. Not detected in leukocytes. Isoform Beta expressed generally at very low levels. Isoform Alpha abundant in epithelial cells from mammary gland, prostate and in normal oral keratinocytes. Low levels in aortic endothelial cells and dermal fibroblasts. Not detectable in myocardium.

It localises to the cytoplasm. It is found in the cell junction. The protein resides in the focal adhesion. Its subcellular location is the cytoskeleton. The protein localises to the stress fiber. It localises to the cell membrane. It is found in the cell projection. The protein resides in the ruffle. Its subcellular location is the lamellipodium. Its function is as follows. Actin-binding protein involved in actin cytoskeleton regulation and dynamics. Increases the number and size of actin stress fibers and inhibits membrane ruffling. Inhibits actin filament depolymerization. Bundles actin filaments, delays filament nucleation and reduces formation of branched filaments. Acts as a negative regulator of primary cilium formation. Plays a role in cholesterol homeostasis. Influences plasma cholesterol levels through regulation of intestinal cholesterol absorption. May act as a scaffold protein by regulating NPC1L1 transportation, an essential protein for cholesterol absorption, to the plasma membrane by recruiting MYO5B to NPC1L1, and thus facilitates cholesterol uptake. The protein is LIM domain and actin-binding protein 1 of Homo sapiens (Human).